A 224-amino-acid chain; its full sequence is Heme response regulator HssR (224 aa).

The region spanning 3–116 (QCLVVDDDPR…ELIFRIRAVL (114 aa)) is the Response regulatory domain. 4-aspartylphosphate is present on Asp-52. Positions 124–222 (NSEMTIGNLT…VRGQGYKVEN (99 aa)) form a DNA-binding region, ompR/PhoB-type.

Post-translationally, phosphorylated by HssS.

The protein localises to the cytoplasm. Member of the two-component regulatory system HssS/HssR involved in intracellular heme homeostasis and tempering of staphylococcal virulence. Phosphorylated HssR binds to a direct repeat sequence within hrtAB promoter and activates the expression of hrtAB, an efflux pump, in response to extracellular heme, hemin, hemoglobin or blood. In Staphylococcus aureus (strain MRSA252), this protein is Heme response regulator HssR (hssR).